The sequence spans 225 residues: Uridylate kinase (225 aa).

Residue 7–11 coordinates ATP; sequence KISGS. Position 44 (G44) interacts with UMP. ATP is bound by residues G45 and R49. UMP contacts are provided by residues D66 and 114–120; that span reads FQPGQST. The ATP site is built by Y147 and E150.

It belongs to the UMP kinase family. As to quaternary structure, homohexamer.

It localises to the cytoplasm. It catalyses the reaction UMP + ATP = UDP + ADP. The protein operates within pyrimidine metabolism; CTP biosynthesis via de novo pathway; UDP from UMP (UMPK route): step 1/1. Inhibited by UTP. In terms of biological role, catalyzes the reversible phosphorylation of UMP to UDP. The polypeptide is Uridylate kinase (Aeropyrum pernix (strain ATCC 700893 / DSM 11879 / JCM 9820 / NBRC 100138 / K1)).